We begin with the raw amino-acid sequence, 306 residues long: Non-specific ribonucleoside hydrolase RihC (306 aa).

The active site involves histidine 235.

It belongs to the IUNH family. RihC subfamily.

Hydrolyzes both purine and pyrimidine ribonucleosides with a broad-substrate specificity. The protein is Non-specific ribonucleoside hydrolase RihC of Salmonella heidelberg (strain SL476).